The following is a 376-amino-acid chain: N-acetyldiaminopimelate deacetylase (376 aa).

The active site involves D69. E128 serves as the catalytic Proton acceptor.

It belongs to the peptidase M20A family. N-acetyldiaminopimelate deacetylase subfamily.

The catalysed reaction is N-acetyl-(2S,6S)-2,6-diaminopimelate + H2O = (2S,6S)-2,6-diaminopimelate + acetate. The protein operates within amino-acid biosynthesis; L-lysine biosynthesis via DAP pathway; LL-2,6-diaminopimelate from (S)-tetrahydrodipicolinate (acetylase route): step 3/3. Catalyzes the conversion of N-acetyl-diaminopimelate to diaminopimelate and acetate. The sequence is that of N-acetyldiaminopimelate deacetylase from Bacillus cereus (strain AH820).